A 618-amino-acid chain; its full sequence is Proline--tRNA ligase (618 aa).

Belongs to the class-II aminoacyl-tRNA synthetase family. ProS type 1 subfamily. Homodimer.

Its subcellular location is the cytoplasm. The enzyme catalyses tRNA(Pro) + L-proline + ATP = L-prolyl-tRNA(Pro) + AMP + diphosphate. In terms of biological role, catalyzes the attachment of proline to tRNA(Pro) in a two-step reaction: proline is first activated by ATP to form Pro-AMP and then transferred to the acceptor end of tRNA(Pro). As ProRS can inadvertently accommodate and process non-cognate amino acids such as alanine and cysteine, to avoid such errors it has two additional distinct editing activities against alanine. One activity is designated as 'pretransfer' editing and involves the tRNA(Pro)-independent hydrolysis of activated Ala-AMP. The other activity is designated 'posttransfer' editing and involves deacylation of mischarged Ala-tRNA(Pro). The misacylated Cys-tRNA(Pro) is not edited by ProRS. The protein is Proline--tRNA ligase of Streptococcus pyogenes serotype M4 (strain MGAS10750).